The following is a 764-amino-acid chain: Putative alpha-1,3-mannosyltransferase MNN13 (764 aa).

At 1–13 the chain is on the cytoplasmic side; it reads MIKPILGTKKIRR. Residues 14–34 form a helical membrane-spanning segment; it reads VICIIIGLFCILLLIGIFKHN. Residues 35 to 764 are Lumenal-facing; the sequence is STNSVNNEAS…YLGDVWVGKY (730 aa). N-linked (GlcNAc...) asparagine glycosylation is found at Asn45 and Asn204.

Belongs to the MNN1/MNT family.

It is found in the golgi apparatus membrane. The protein operates within protein modification; protein glycosylation. Responsible for addition of the terminal mannose residues to the outer chain of core N-linked polysaccharides and to O-linked mannotriose. Implicated in late Golgi modifications. In Candida albicans (strain SC5314 / ATCC MYA-2876) (Yeast), this protein is Putative alpha-1,3-mannosyltransferase MNN13 (MNN13).